Here is a 232-residue protein sequence, read N- to C-terminus: Protein shisa-3 (232 aa).

An N-terminal signal peptide occupies residues 1–19 (MRLLGCFFLIFLTWGSARA). Topologically, residues 20–93 (QGEYCHGWLD…GVSAQPVYVP (74 aa)) are lumenal. Residues 94–114 (FLIVGSIFIAFIIVGSLVAVY) form a helical membrane-spanning segment. Residues 115-232 (CCTCLRPKQT…NKSCPDFRQS (118 aa)) are Cytoplasmic-facing. Residues 146-185 (TSGNLRTPSRQSSTATSSTSTGGSVRRLSSSRADPGYLVS) form a disordered region. A compositionally biased stretch (low complexity) spans 151 to 177 (RTPSRQSSTATSSTSTGGSVRRLSSSR).

This sequence belongs to the shisa family. In terms of assembly, interacts with fzd8 and fgfr1.

It localises to the endoplasmic reticulum membrane. Its function is as follows. Plays an essential role in the maturation of presomitic mesoderm cells by individual attenuation of both fgf and wnt signaling. Regulates head and somite developmen. Inhibits both wnt and fgf signaling through the regulation of protein maturation and cell surface transportation of their receptors within the endoplasmic reticulum. This chain is Protein shisa-3 (shisa3), found in Xenopus laevis (African clawed frog).